The primary structure comprises 29 residues: Cuticle protein 36 (29 aa).

Its function is as follows. Component of the cuticle of migratory locust which contains more than 100 different structural proteins. The protein is Cuticle protein 36 of Locusta migratoria (Migratory locust).